We begin with the raw amino-acid sequence, 545 residues long: Phenylalanine--tRNA ligase beta subunit (545 aa).

The 76-residue stretch at 268–343 (FLHKIQNVRE…MSIGYNNLEP (76 aa)) folds into the B5 domain. Mg(2+) contacts are provided by aspartate 321, aspartate 327, glutamate 330, and aspartate 331.

The protein belongs to the phenylalanyl-tRNA synthetase beta subunit family. Type 2 subfamily. Tetramer of two alpha and two beta subunits. Mg(2+) is required as a cofactor.

The protein resides in the cytoplasm. The enzyme catalyses tRNA(Phe) + L-phenylalanine + ATP = L-phenylalanyl-tRNA(Phe) + AMP + diphosphate + H(+). This Saccharolobus islandicus (strain M.16.27) (Sulfolobus islandicus) protein is Phenylalanine--tRNA ligase beta subunit.